The primary structure comprises 209 residues: uncharacterized protein (209 aa).

This is an uncharacterized protein from Arabidopsis thaliana (Mouse-ear cress).